Reading from the N-terminus, the 494-residue chain is Aspartyl/glutamyl-tRNA(Asn/Gln) amidotransferase subunit B (494 aa).

The protein belongs to the GatB/GatE family. GatB subfamily. As to quaternary structure, heterotrimer of A, B and C subunits.

The catalysed reaction is L-glutamyl-tRNA(Gln) + L-glutamine + ATP + H2O = L-glutaminyl-tRNA(Gln) + L-glutamate + ADP + phosphate + H(+). It catalyses the reaction L-aspartyl-tRNA(Asn) + L-glutamine + ATP + H2O = L-asparaginyl-tRNA(Asn) + L-glutamate + ADP + phosphate + 2 H(+). Allows the formation of correctly charged Asn-tRNA(Asn) or Gln-tRNA(Gln) through the transamidation of misacylated Asp-tRNA(Asn) or Glu-tRNA(Gln) in organisms which lack either or both of asparaginyl-tRNA or glutaminyl-tRNA synthetases. The reaction takes place in the presence of glutamine and ATP through an activated phospho-Asp-tRNA(Asn) or phospho-Glu-tRNA(Gln). The sequence is that of Aspartyl/glutamyl-tRNA(Asn/Gln) amidotransferase subunit B from Synechococcus sp. (strain WH7803).